A 561-amino-acid polypeptide reads, in one-letter code: Potassium-transporting ATPase potassium-binding subunit (561 aa).

Transmembrane regions (helical) follow at residues 2–22 (GQGL…TPVL), 66–86 (IRAI…LIYF), 135–155 (ALGF…IAFI), 177–197 (ILLP…VPQT), 253–273 (LIET…YGVF), 280–300 (AWLL…VAAG), 327–347 (FGWA…CGAV), 354–374 (LMPQ…IWGG), 378–398 (GTAY…LMVG), 413–433 (IVLA…PSAI), 482–502 (LSTS…MLLL), and 531–551 (AGIV…LGPI).

Belongs to the KdpA family. The system is composed of three essential subunits: KdpA, KdpB and KdpC.

Its subcellular location is the cell inner membrane. In terms of biological role, part of the high-affinity ATP-driven potassium transport (or Kdp) system, which catalyzes the hydrolysis of ATP coupled with the electrogenic transport of potassium into the cytoplasm. This subunit binds the periplasmic potassium ions and delivers the ions to the membrane domain of KdpB through an intramembrane tunnel. This chain is Potassium-transporting ATPase potassium-binding subunit, found in Nostoc sp. (strain PCC 7120 / SAG 25.82 / UTEX 2576).